A 235-amino-acid polypeptide reads, in one-letter code: MTDGNQKPDGNSGEQVTVTDKRRIDPETGEVRHVPPGDMPGGTAAADAAHTEDKVAELTADLQRVQADFANYRKRALRDQQAAADRAKASVVSQLLGVLDDLERARKHGDLESGPLKSVADKLDSALTGLGLVAFGAEGEDFDPVLHEAVQHEGDGGQGSKPVIGTVMRQGYQLGEQVLRHALVGVVDTVVVDAAELESVDDGTAVADTAENDQADQGNSADTLGEQAESEPSGS.

Polar residues predominate over residues 1-18 (MTDGNQKPDGNSGEQVTV). Disordered regions lie at residues 1–50 (MTDG…DAAH) and 198–235 (ESVDDGTAVADTAENDQADQGNSADTLGEQAESEPSGS). The span at 19 to 35 (TDKRRIDPETGEVRHVP) shows a compositional bias: basic and acidic residues.

The protein belongs to the GrpE family. As to quaternary structure, homodimer.

The protein resides in the cytoplasm. Functionally, participates actively in the response to hyperosmotic and heat shock by preventing the aggregation of stress-denatured proteins, in association with DnaK and GrpE. It is the nucleotide exchange factor for DnaK and may function as a thermosensor. Unfolded proteins bind initially to DnaJ; upon interaction with the DnaJ-bound protein, DnaK hydrolyzes its bound ATP, resulting in the formation of a stable complex. GrpE releases ADP from DnaK; ATP binding to DnaK triggers the release of the substrate protein, thus completing the reaction cycle. Several rounds of ATP-dependent interactions between DnaJ, DnaK and GrpE are required for fully efficient folding. In Mycobacterium bovis (strain BCG / Pasteur 1173P2), this protein is Protein GrpE.